A 145-amino-acid polypeptide reads, in one-letter code: D-aminoacyl-tRNA deacylase (145 aa).

The short motif at 137 to 138 (GP) is the Gly-cisPro motif, important for rejection of L-amino acids element.

This sequence belongs to the DTD family. As to quaternary structure, homodimer.

The protein resides in the cytoplasm. It catalyses the reaction glycyl-tRNA(Ala) + H2O = tRNA(Ala) + glycine + H(+). It carries out the reaction a D-aminoacyl-tRNA + H2O = a tRNA + a D-alpha-amino acid + H(+). Its function is as follows. An aminoacyl-tRNA editing enzyme that deacylates mischarged D-aminoacyl-tRNAs. Also deacylates mischarged glycyl-tRNA(Ala), protecting cells against glycine mischarging by AlaRS. Acts via tRNA-based rather than protein-based catalysis; rejects L-amino acids rather than detecting D-amino acids in the active site. By recycling D-aminoacyl-tRNA to D-amino acids and free tRNA molecules, this enzyme counteracts the toxicity associated with the formation of D-aminoacyl-tRNA entities in vivo and helps enforce protein L-homochirality. In Deinococcus radiodurans (strain ATCC 13939 / DSM 20539 / JCM 16871 / CCUG 27074 / LMG 4051 / NBRC 15346 / NCIMB 9279 / VKM B-1422 / R1), this protein is D-aminoacyl-tRNA deacylase.